The sequence spans 185 residues: Ribosome-recycling factor (185 aa).

The protein belongs to the RRF family.

The protein localises to the cytoplasm. Responsible for the release of ribosomes from messenger RNA at the termination of protein biosynthesis. May increase the efficiency of translation by recycling ribosomes from one round of translation to another. In Shewanella sp. (strain W3-18-1), this protein is Ribosome-recycling factor.